The primary structure comprises 150 residues: UPF0178 protein AZOSEA36080 (150 aa).

The protein belongs to the UPF0178 family.

This is UPF0178 protein AZOSEA36080 from Aromatoleum aromaticum (strain DSM 19018 / LMG 30748 / EbN1) (Azoarcus sp. (strain EbN1)).